Here is a 74-residue protein sequence, read N- to C-terminus: Translation initiation factor IF-1, chloroplastic (74 aa).

The S1-like domain maps to 1-72; the sequence is MERQNLIEME…TKGRITYRLR (72 aa).

This sequence belongs to the IF-1 family. As to quaternary structure, component of the 30S ribosomal translation pre-initiation complex which assembles on the 30S ribosome in the order IF-2 and IF-3, IF-1 and N-formylmethionyl-tRNA(fMet); mRNA recruitment can occur at any time during PIC assembly.

The protein localises to the plastid. The protein resides in the chloroplast. Functionally, one of the essential components for the initiation of protein synthesis. Stabilizes the binding of IF-2 and IF-3 on the 30S subunit to which N-formylmethionyl-tRNA(fMet) subsequently binds. Helps modulate mRNA selection, yielding the 30S pre-initiation complex (PIC). Upon addition of the 50S ribosomal subunit IF-1, IF-2 and IF-3 are released leaving the mature 70S translation initiation complex. In Mesostigma viride (Green alga), this protein is Translation initiation factor IF-1, chloroplastic.